The following is a 277-amino-acid chain: Large ribosomal subunit protein uL2 (277 aa).

The interval 219–277 (RPQTRGSAMNPVDHPHGGGEGKKNSGRHPVTPWGKPTKGAKTRRKKASDKLIISRRKGK) is disordered. Positions 231–241 (DHPHGGGEGKK) are enriched in basic and acidic residues. Residues 256–277 (KGAKTRRKKASDKLIISRRKGK) show a composition bias toward basic residues.

The protein belongs to the universal ribosomal protein uL2 family. As to quaternary structure, part of the 50S ribosomal subunit. Forms a bridge to the 30S subunit in the 70S ribosome.

One of the primary rRNA binding proteins. Required for association of the 30S and 50S subunits to form the 70S ribosome, for tRNA binding and peptide bond formation. It has been suggested to have peptidyltransferase activity; this is somewhat controversial. Makes several contacts with the 16S rRNA in the 70S ribosome. The chain is Large ribosomal subunit protein uL2 from Campylobacter curvus (strain 525.92).